Here is a 422-residue protein sequence, read N- to C-terminus: Beta-1,3-galactosyltransferase 2 (422 aa).

Residues 1-20 (MLQWRRRHCCFAKMTWSPKR) lie on the Cytoplasmic side of the membrane. Residues 21 to 43 (SLLRTPLTGVLSLVFLFAMFLFF) form a helical; Signal-anchor for type II membrane protein membrane-spanning segment. The Lumenal portion of the chain corresponds to 44–422 (NHHDWLPGRP…AGRYRHRKLH (379 aa)). 5 N-linked (GlcNAc...) asparagine glycosylation sites follow: N75, N98, N119, N176, and N226. The interval 91–110 (LRPHTASNSSNTELSPQGVT) is disordered. The segment covering 95-110 (TASNSSNTELSPQGVT) has biased composition (polar residues).

This sequence belongs to the glycosyltransferase 31 family. The cofactor is Mn(2+). In terms of tissue distribution, detected in brain and heart.

It is found in the golgi apparatus membrane. It catalyses the reaction an N-acetyl-beta-D-glucosaminyl derivative + UDP-alpha-D-galactose = a beta-D-galactosyl-(1-&gt;3)-N-acetyl-beta-D-glucosaminyl derivative + UDP + H(+). It carries out the reaction a beta-D-GlcNAc-(1-&gt;3)-beta-D-Gal-(1-&gt;4)-beta-D-Glc-(1&lt;-&gt;1)-Cer(d18:1(4E)) + UDP-alpha-D-galactose = a beta-D-Gal-(1-&gt;3)-beta-D-GlcNAc-(1-&gt;3)-beta-D-Gal-(1-&gt;4)-beta-D-Glc-(1&lt;-&gt;1')-Cer(d18:1(4E)) + UDP + H(+). The catalysed reaction is a neolactoside IV(3)-beta-GlcNAc-nLc4Cer(d18:1(4E)) + UDP-alpha-D-galactose = a neolactoside IV(3)-beta-[Gal-beta-(1-&gt;3)-GlcNAc]-nLc4Cer(d18:1(4E)) + UDP + H(+). Its pathway is protein modification; protein glycosylation. Functionally, beta-1,3-galactosyltransferase that transfers galactose from UDP-galactose to substrates with a terminal beta-N-acetylglucosamine (beta-GlcNAc) residue. Can also utilize substrates with a terminal galactose residue, albeit with lower efficiency. Involved in the biosynthesis of the carbohydrate moieties of glycolipids and glycoproteins. The sequence is that of Beta-1,3-galactosyltransferase 2 from Mus musculus (Mouse).